Reading from the N-terminus, the 218-residue chain is Pyridoxine/pyridoxamine 5'-phosphate oxidase (218 aa).

Residues 14 to 17 (RREY) and Lys72 contribute to the substrate site. Residues 67-72 (RIVLLK), 82-83 (YT), Arg88, Lys89, and Gln111 each bind FMN. Substrate is bound by residues Tyr129, Arg133, and Ser137. FMN contacts are provided by residues 146–147 (QS) and Trp191. 197–199 (RLH) serves as a coordination point for substrate. Arg201 contributes to the FMN binding site.

The protein belongs to the pyridoxamine 5'-phosphate oxidase family. In terms of assembly, homodimer. FMN is required as a cofactor.

It catalyses the reaction pyridoxamine 5'-phosphate + O2 + H2O = pyridoxal 5'-phosphate + H2O2 + NH4(+). The enzyme catalyses pyridoxine 5'-phosphate + O2 = pyridoxal 5'-phosphate + H2O2. Its pathway is cofactor metabolism; pyridoxal 5'-phosphate salvage; pyridoxal 5'-phosphate from pyridoxamine 5'-phosphate: step 1/1. It functions in the pathway cofactor metabolism; pyridoxal 5'-phosphate salvage; pyridoxal 5'-phosphate from pyridoxine 5'-phosphate: step 1/1. Functionally, catalyzes the oxidation of either pyridoxine 5'-phosphate (PNP) or pyridoxamine 5'-phosphate (PMP) into pyridoxal 5'-phosphate (PLP). The protein is Pyridoxine/pyridoxamine 5'-phosphate oxidase of Salmonella typhi.